The sequence spans 484 residues: Bifunctional protein GlmU (484 aa).

Residues 1–240 (MSNPHSSAVI…HRELAGVNDR (240 aa)) are pyrophosphorylase. Residues 12–15 (LAAG), K26, Q83, and 88–89 (GT) each bind UDP-N-acetyl-alpha-D-glucosamine. D113 contacts Mg(2+). G150, E165, N180, and N238 together coordinate UDP-N-acetyl-alpha-D-glucosamine. Residue N238 coordinates Mg(2+). The linker stretch occupies residues 241–261 (VQLAQAGKILNQRLVEDAMRN). The tract at residues 262–484 (GATIVDPDTT…QAHAHETKEG (223 aa)) is N-acetyltransferase. UDP-N-acetyl-alpha-D-glucosamine is bound by residues R343 and K361. The active-site Proton acceptor is the H373. Positions 376 and 387 each coordinate UDP-N-acetyl-alpha-D-glucosamine. Acetyl-CoA contacts are provided by residues A390, 396–397 (NY), S415, and A433. The tract at residues 461–484 (EKNRPGTPAADAARQAHAHETKEG) is disordered.

It in the N-terminal section; belongs to the N-acetylglucosamine-1-phosphate uridyltransferase family. The protein in the C-terminal section; belongs to the transferase hexapeptide repeat family. As to quaternary structure, homotrimer. Mg(2+) serves as cofactor.

The protein localises to the cytoplasm. The enzyme catalyses alpha-D-glucosamine 1-phosphate + acetyl-CoA = N-acetyl-alpha-D-glucosamine 1-phosphate + CoA + H(+). It catalyses the reaction N-acetyl-alpha-D-glucosamine 1-phosphate + UTP + H(+) = UDP-N-acetyl-alpha-D-glucosamine + diphosphate. It functions in the pathway nucleotide-sugar biosynthesis; UDP-N-acetyl-alpha-D-glucosamine biosynthesis; N-acetyl-alpha-D-glucosamine 1-phosphate from alpha-D-glucosamine 6-phosphate (route II): step 2/2. The protein operates within nucleotide-sugar biosynthesis; UDP-N-acetyl-alpha-D-glucosamine biosynthesis; UDP-N-acetyl-alpha-D-glucosamine from N-acetyl-alpha-D-glucosamine 1-phosphate: step 1/1. It participates in bacterial outer membrane biogenesis; LPS lipid A biosynthesis. Functionally, catalyzes the last two sequential reactions in the de novo biosynthetic pathway for UDP-N-acetylglucosamine (UDP-GlcNAc). The C-terminal domain catalyzes the transfer of acetyl group from acetyl coenzyme A to glucosamine-1-phosphate (GlcN-1-P) to produce N-acetylglucosamine-1-phosphate (GlcNAc-1-P), which is converted into UDP-GlcNAc by the transfer of uridine 5-monophosphate (from uridine 5-triphosphate), a reaction catalyzed by the N-terminal domain. The sequence is that of Bifunctional protein GlmU from Corynebacterium diphtheriae (strain ATCC 700971 / NCTC 13129 / Biotype gravis).